The chain runs to 448 residues: Beta-glucosidase A (448 aa).

E166 (proton donor) is an active-site residue. E352 acts as the Nucleophile in catalysis.

This sequence belongs to the glycosyl hydrolase 1 family. In terms of assembly, homooctamer.

The enzyme catalyses Hydrolysis of terminal, non-reducing beta-D-glucosyl residues with release of beta-D-glucose.. Functionally, bglA is intracellular and cleaves cellobiose probably through inorganic phosphate mediated hydrolysis. The sequence is that of Beta-glucosidase A (bglA) from Paenibacillus polymyxa (Bacillus polymyxa).